A 224-amino-acid chain; its full sequence is Uracil-DNA glycosylase 2 (224 aa).

Aspartate 64 serves as the catalytic Proton acceptor.

It belongs to the uracil-DNA glycosylase (UDG) superfamily. UNG family.

The protein localises to the cytoplasm. It catalyses the reaction Hydrolyzes single-stranded DNA or mismatched double-stranded DNA and polynucleotides, releasing free uracil.. Its function is as follows. Excises uracil residues from the DNA which can arise as a result of misincorporation of dUMP residues by DNA polymerase or due to deamination of cytosine. The polypeptide is Uracil-DNA glycosylase 2 (Listeria innocua serovar 6a (strain ATCC BAA-680 / CLIP 11262)).